The sequence spans 305 residues: Dihydroorotate dehydrogenase B (NAD(+)), catalytic subunit (305 aa).

Residues S23 and 47-48 each bind FMN; that span reads KG. Residues K47 and 71–75 each bind substrate; that span reads NAIGL. N101 and N129 together coordinate FMN. N129 contacts substrate. The Nucleophile role is filled by C132. FMN-binding residues include K167 and I193. Position 194–195 (194–195) interacts with substrate; that stretch reads NT. FMN-binding positions include G219, 245–246, and 267–268; these read GG and GT.

The protein belongs to the dihydroorotate dehydrogenase family. Type 1 subfamily. Heterotetramer of 2 PyrK and 2 PyrD type B subunits. FMN is required as a cofactor.

It localises to the cytoplasm. The enzyme catalyses (S)-dihydroorotate + NAD(+) = orotate + NADH + H(+). Its pathway is pyrimidine metabolism; UMP biosynthesis via de novo pathway; orotate from (S)-dihydroorotate (NAD(+) route): step 1/1. Catalyzes the conversion of dihydroorotate to orotate with NAD(+) as electron acceptor. This chain is Dihydroorotate dehydrogenase B (NAD(+)), catalytic subunit (pyrD), found in Geobacter sulfurreducens (strain ATCC 51573 / DSM 12127 / PCA).